A 323-amino-acid polypeptide reads, in one-letter code: Elongation factor P--(R)-beta-lysine ligase (323 aa).

A substrate-binding site is contributed by 76 to 78 (SPE). ATP-binding positions include 100 to 102 (RNE) and Asn-109. Substrate is bound at residue Tyr-118. 242-243 (EL) lines the ATP pocket. Position 249 (Glu-249) interacts with substrate. Gly-298 is a binding site for ATP.

It belongs to the class-II aminoacyl-tRNA synthetase family. EpmA subfamily. Homodimer.

The enzyme catalyses D-beta-lysine + L-lysyl-[protein] + ATP = N(6)-((3R)-3,6-diaminohexanoyl)-L-lysyl-[protein] + AMP + diphosphate + H(+). Its function is as follows. With EpmB is involved in the beta-lysylation step of the post-translational modification of translation elongation factor P (EF-P). Catalyzes the ATP-dependent activation of (R)-beta-lysine produced by EpmB, forming a lysyl-adenylate, from which the beta-lysyl moiety is then transferred to the epsilon-amino group of a conserved specific lysine residue in EF-P. This chain is Elongation factor P--(R)-beta-lysine ligase, found in Pasteurella multocida (strain Pm70).